A 252-amino-acid chain; its full sequence is MQIKRWFLNNSLRNYQYLLYDKSHAIVIDPLKSDIFAEFIAKNKLQLEAILITHKHGDHIAGVKKLLAIYPNAKVYAYTGNDLFKPDIYVKDGSFINLGFTSFRVMYIPGHIDDHVCFLFEQERALFCGDTLFNAGVGGVQAESADINQLYDSLVKITKLDGDIKPYPAHDYWLGNLDFALSILADDSYFNYYRNQVAELAAEDKPIVNLAEEAKLNIFIRAMSDKALLKALPDYSLGREMFVKLRQLKNNF.

Residues His54, His56, Asp58, His59, His111, Asp130, and His170 each contribute to the Zn(2+) site.

This sequence belongs to the metallo-beta-lactamase superfamily. Glyoxalase II family. As to quaternary structure, monomer. The cofactor is Zn(2+).

It carries out the reaction an S-(2-hydroxyacyl)glutathione + H2O = a 2-hydroxy carboxylate + glutathione + H(+). The protein operates within secondary metabolite metabolism; methylglyoxal degradation; (R)-lactate from methylglyoxal: step 2/2. Thiolesterase that catalyzes the hydrolysis of S-D-lactoyl-glutathione to form glutathione and D-lactic acid. This Francisella tularensis subsp. holarctica (strain FTNF002-00 / FTA) protein is Hydroxyacylglutathione hydrolase.